Consider the following 347-residue polypeptide: MSDRLTLLRPDDWHIHLRDGAVLPHTVADVARTFGRAIIMPNLVPPVRNAQQADAYRQRILAARPATSRFEPLMVLYLTDQTTPDDIRTAKASGFVYAAKLYPAGATTNSDSGVTSIDKIFPALEAMADVGMLLLVHGEVTRGEIDVFDREKVFIDEHLRRVVERFPSLKVVFEHITTGEAVQFVNEASANVAATITAHHLLYNRNHMLVGGIRPHFYCLPILKRNTHQTALLDAATSGSGKFFLGTDSAPHAQHAKENACGCAGCYTAYAAIELYAEAFEQRNALDKLEGFASLHGPAFYGLPANQDTITLVRDEWTAPASLPFGELTVIPLRAGETLRWRLEEHA.

The Zn(2+) site is built by histidine 14 and histidine 16. Residues histidine 16–arginine 18 and asparagine 42 each bind substrate. Lysine 100, histidine 137, and histidine 175 together coordinate Zn(2+). Lysine 100 is modified (N6-carboxylysine). Residue histidine 137 coordinates substrate. Leucine 220 provides a ligand contact to substrate. Zn(2+) is bound at residue aspartate 248. Aspartate 248 is a catalytic residue. 2 residues coordinate substrate: histidine 252 and alanine 264.

It belongs to the metallo-dependent hydrolases superfamily. DHOase family. Class II DHOase subfamily. Homodimer. Zn(2+) is required as a cofactor.

The enzyme catalyses (S)-dihydroorotate + H2O = N-carbamoyl-L-aspartate + H(+). It participates in pyrimidine metabolism; UMP biosynthesis via de novo pathway; (S)-dihydroorotate from bicarbonate: step 3/3. Its function is as follows. Catalyzes the reversible cyclization of carbamoyl aspartate to dihydroorotate. This Pseudomonas syringae pv. syringae (strain B728a) protein is Dihydroorotase.